The primary structure comprises 70 residues: Small ribosomal subunit protein bS21A (70 aa).

It belongs to the bacterial ribosomal protein bS21 family.

The chain is Small ribosomal subunit protein bS21A from Burkholderia orbicola (strain AU 1054).